The sequence spans 162 residues: Caveolin-2 (162 aa).

The Cytoplasmic segment spans residues 1–86; sequence MGLETEKADV…FEISKYVMYK (86 aa). Residue Tyr-19 is modified to Phosphotyrosine; by SRC. A phosphoserine mark is found at Ser-20 and Ser-23. The residue at position 27 (Tyr-27) is a Phosphotyrosine; by SRC. Residue Ser-36 is modified to Phosphoserine. The helical intramembrane region spans 87–107; sequence FLTVFLAIPLAFIAGILFATL. Over 108-162 the chain is Cytoplasmic; it reads SCLHIWILMPFVKTCLMVLPSVQTIWKSVTDVIIAPLCTSVGRCFSSVSLQLSQD.

The protein belongs to the caveolin family. As to quaternary structure, monomer or homodimer. Interacts with CAV1; the interaction forms a stable heterooligomeric complex that is required for targeting to lipid rafts and for caveolae formation. Tyrosine phosphorylated forms do not form heterooligomers with the Tyr-19-phosphorylated form existing as a monomer or dimer, and the Tyr-27-form as a monomer only. Interacts (tyrosine phosphorylated form) with the SH2 domain-containing proteins, RASA1, NCK1 and SRC. Interacts (tyrosine phosphorylated form) with INSR, the interaction (Tyr-27-phosphorylated form) is increased on insulin stimulation. Interacts (Tyr-19 phosphorylated form) with MAPK1 (phosphorylated form); the interaction, promoted by insulin, leads to nuclear location and MAPK1 activation. Interacts with STAT3; the interaction is increased on insulin-induced tyrosine phosphorylation leading to STAT activation. Post-translationally, phosphorylated on serine and tyrosine residues. CAV1 promotes phosphorylation on Ser-23 which then targets the complex to the plasma membrane, lipid rafts and caveolae. Phosphorylation on Ser-36 appears to modulate mitosis in endothelial cells. Phosphorylation on both Tyr-19 and Tyr-27 is required for insulin-induced 'Ser-727' phosphorylation of STAT3 and its activation. Phosphorylation on Tyr-19 is required for insulin-induced phosphorylation of MAPK1 and DNA binding of STAT3. Tyrosine phosphorylation is induced by both EGF and insulin (By. similarity).

It localises to the nucleus. The protein resides in the cytoplasm. The protein localises to the golgi apparatus membrane. It is found in the cell membrane. Its subcellular location is the membrane. It localises to the caveola. Functionally, may act as a scaffolding protein within caveolar membranes. Interacts directly with G-protein alpha subunits and can functionally regulate their activity. Acts as an accessory protein in conjunction with CAV1 in targeting to lipid rafts and driving caveolae formation. The Ser-36 phosphorylated form has a role in modulating mitosis in endothelial cells. Positive regulator of cellular mitogenesis of the MAPK signaling pathway. Required for the insulin-stimulated nuclear translocation and activation of MAPK1 and STAT3, and the subsequent regulation of cell cycle progression. This is Caveolin-2 (CAV2) from Gorilla gorilla gorilla (Western lowland gorilla).